Here is a 968-residue protein sequence, read N- to C-terminus: Serine/threonine-protein kinase 10 (968 aa).

Phosphoserine is present on residues Ser-13 and Ser-20. The region spanning 36–294 is the Protein kinase domain; it reads WEIVGELGDG…AAQLLEHPFV (259 aa). ATP contacts are provided by residues 42-50 and Lys-65; that span reads LGDGAFGKV. Residue Asp-157 is the Proton acceptor of the active site. The activation segment stretch occupies residues 175-224; the sequence is DFGVSAKNLKTLQKRDSFIGTPYWMAPEVVMCETMKDTPYDYKADIWSLG. Ser-191 bears the Phosphoserine mark. 2 stretches are compositionally biased toward polar residues: residues 337 to 351 and 361 to 393; these read LENH…SPPS and SPST…TTSP. 2 disordered regions span residues 337–411 and 425–490; these read LENH…VPLR and AQEK…CSSL. 6 positions are modified to phosphoserine: Ser-438, Ser-450, Ser-454, Ser-485, Ser-514, and Ser-549. Residues 441–457 show a composition bias toward polar residues; sequence ANRSQKASQSRPNSSAL. The stretch at 573–947 forms a coiled coil; sequence QKEEHRNQTQ…FFKLSEEAEC (375 aa). Disordered regions lie at residues 668–690, 827–865, 910–929, and 944–968; these read VEKL…HTQK, INGG…HENQ, LKEW…EDLN, and EAEC…ADAS. Basic and acidic residues predominate over residues 835–865; it reads EQREKIKQFSQQEEKRQKSERLQQQQKHENQ. Thr-952 carries the post-translational modification Phosphothreonine.

It belongs to the protein kinase superfamily. STE Ser/Thr protein kinase family. STE20 subfamily. Homodimer; homodimerization is required for activation segment autophosphorylation. In terms of processing, autophosphorylates following homodimerization, leading to activation of the protein. In terms of tissue distribution, highly expressed in rapidly proliferating tissues (spleen, placenta, and peripheral blood leukocytes). Also expressed in brain, heart, skeletal muscle, colon, thymus, kidney, liver, small intestine and lung.

It localises to the cell membrane. The catalysed reaction is L-seryl-[protein] + ATP = O-phospho-L-seryl-[protein] + ADP + H(+). The enzyme catalyses L-threonyl-[protein] + ATP = O-phospho-L-threonyl-[protein] + ADP + H(+). Its activity is regulated as follows. Inhibited by the pyrrole-indolinone inhibitor SU11274 (K00593): intercalates between the ATP-binding Lys-65 and alpha-C glutamate (Glu-81), resulting in a partial disordering of the lysine side chain. Also specifically inhibited by erlotinib. Slightly inhibited by gefitinib. Its function is as follows. Serine/threonine-protein kinase involved in regulation of lymphocyte migration. Phosphorylates MSN, and possibly PLK1. Involved in regulation of lymphocyte migration by mediating phosphorylation of ERM proteins such as MSN. Acts as a negative regulator of MAP3K1/MEKK1. May also act as a cell cycle regulator by acting as a polo kinase kinase: mediates phosphorylation of PLK1 in vitro; however such data require additional evidences in vivo. In Homo sapiens (Human), this protein is Serine/threonine-protein kinase 10 (STK10).